A 295-amino-acid polypeptide reads, in one-letter code: Forkhead box protein N5 (295 aa).

Residues 119–146 (STVEDSEDEAPTSCSDLMTDDDNDDSYN) are disordered. The fork-head DNA-binding region spans 178 to 275 (RPPLNYCNLI…NEMHALSDDL (98 aa)).

In terms of tissue distribution, ubiquitously expressed in early cleavage stage and gastrula stage embryos.

The protein localises to the nucleus. The protein is Forkhead box protein N5 of Xenopus laevis (African clawed frog).